A 435-amino-acid polypeptide reads, in one-letter code: Zinc finger CCCH domain-containing protein 17 (435 aa).

2 disordered regions span residues 1-30 (MDIE…SSTS) and 58-107 (TAKR…GPRH). Residues 28-54 (STSGKVCIHWRAGRCNRFPCPYLHSEL) form a C3H1-type 1 zinc finger. Gly residues predominate over residues 77–103 (SGGGGGRGAGGAGGPNKWGRGPGGADG). The C3H1-type 2 zinc finger occupies 108-135 (KVPDRPCRYFLAGDCSYGEKCRYPHSYS). WD repeat units follow at residues 148–189 (GHEK…GVIN), 191–225 (GREI…EMNL), 227–264 (GPTG…NGFE), 271–308 (GHQL…CIQT), 311–348 (DHTG…SLEV), 355–395 (EHGA…DRGR), and 397–435 (FSKQ…SQTK).

The chain is Zinc finger CCCH domain-containing protein 17 from Oryza sativa subsp. japonica (Rice).